The following is a 137-amino-acid chain: Nucleoside diphosphate kinase (137 aa).

Residues lysine 9, phenylalanine 57, arginine 85, threonine 91, arginine 102, and asparagine 112 each coordinate ATP. The Pros-phosphohistidine intermediate role is filled by histidine 115.

It belongs to the NDK family. As to quaternary structure, homotetramer. Mg(2+) is required as a cofactor.

The protein localises to the cytoplasm. It catalyses the reaction a 2'-deoxyribonucleoside 5'-diphosphate + ATP = a 2'-deoxyribonucleoside 5'-triphosphate + ADP. It carries out the reaction a ribonucleoside 5'-diphosphate + ATP = a ribonucleoside 5'-triphosphate + ADP. Functionally, major role in the synthesis of nucleoside triphosphates other than ATP. The ATP gamma phosphate is transferred to the NDP beta phosphate via a ping-pong mechanism, using a phosphorylated active-site intermediate. This Campylobacter hominis (strain ATCC BAA-381 / DSM 21671 / CCUG 45161 / LMG 19568 / NCTC 13146 / CH001A) protein is Nucleoside diphosphate kinase.